A 309-amino-acid chain; its full sequence is Taste receptor type 2 member 20 (309 aa).

Topologically, residues 1–6 are extracellular; the sequence is MMSFLH. A helical membrane pass occupies residues 7-27; the sequence is IVFSILVVVAFILGNFANGFI. At 28–46 the chain is on the cytoplasmic side; sequence ALINFIAWVKRQKISSADQ. The chain crosses the membrane as a helical span at residues 47-67; the sequence is IIAALAVSRVGLLWVILLHWY. Over 68 to 79 the chain is Extracellular; the sequence is STVLNPTSSNLK. The helical transmembrane segment at 80-100 threads the bilayer; it reads VIIFISNAWAVTNHFSIWLAT. Residues 101 to 125 are Cytoplasmic-facing; it reads SLSIFYLLKIVNFSRLIFHHLKRKA. A helical transmembrane segment spans residues 126-146; that stretch reads KSVVLVIVLGSLFFLVCHLVM. At 147 to 178 the chain is on the extracellular side; it reads KHTYINVWTEECEGNVTWKIKLRNAMHLSNLT. Residues Asn161 and Asn176 are each glycosylated (N-linked (GlcNAc...) asparagine). Residues 179–199 form a helical membrane-spanning segment; it reads VAMLANLIPFTLTLISFLLLI. Residues 200–229 lie on the Cytoplasmic side of the membrane; the sequence is YSLCKHLKKMQLHGKGSQDPSTKIHIKALQ. The helical transmembrane segment at 230 to 250 threads the bilayer; sequence TVTSFLILLAIYFLCLIISFW. Residues 251 to 259 are Extracellular-facing; that stretch reads NFKMRPKEI. Residues 260–280 form a helical membrane-spanning segment; sequence VLMLCQAFGIIYPSFHSFILI. At 281 to 309 the chain is on the cytoplasmic side; the sequence is WGNKTLKQTFLSVLWQVTCWAKGQNQSTP.

It belongs to the G-protein coupled receptor T2R family. As to expression, expressed in subsets of taste receptor cells of the tongue and exclusively in gustducin-positive cells.

It localises to the membrane. Its function is as follows. Receptor that may play a role in the perception of bitterness and is gustducin-linked. May play a role in sensing the chemical composition of the gastrointestinal content. The activity of this receptor may stimulate alpha gustducin, mediate PLC-beta-2 activation and lead to the gating of TRPM5. In Homo sapiens (Human), this protein is Taste receptor type 2 member 20 (TAS2R20).